A 256-amino-acid polypeptide reads, in one-letter code: Protein FixA (256 aa).

It belongs to the ETF beta-subunit/FixA family. Heterodimer of FixA and FixB.

The protein operates within amine and polyamine metabolism; carnitine metabolism. In terms of biological role, required for anaerobic carnitine reduction. May bring reductant to CaiA. In Escherichia coli O17:K52:H18 (strain UMN026 / ExPEC), this protein is Protein FixA.